The primary structure comprises 686 residues: DNA ligase 1 (686 aa).

NAD(+)-binding positions include Asp-35–Asp-39, Ser-84–Leu-85, and Glu-119. Lys-121 functions as the N6-AMP-lysine intermediate in the catalytic mechanism. NAD(+)-binding residues include Arg-142, Glu-177, Lys-293, and Lys-317. Residues Cys-411, Cys-414, Cys-429, and Cys-434 each coordinate Zn(2+). One can recognise a BRCT domain in the interval Arg-602 to Pro-686.

It belongs to the NAD-dependent DNA ligase family. LigA subfamily. The cofactor is Mg(2+). Mn(2+) serves as cofactor.

It carries out the reaction NAD(+) + (deoxyribonucleotide)n-3'-hydroxyl + 5'-phospho-(deoxyribonucleotide)m = (deoxyribonucleotide)n+m + AMP + beta-nicotinamide D-nucleotide.. Functionally, DNA ligase that catalyzes the formation of phosphodiester linkages between 5'-phosphoryl and 3'-hydroxyl groups in double-stranded DNA using NAD as a coenzyme and as the energy source for the reaction. It is essential for DNA replication and repair of damaged DNA. In Deinococcus deserti (strain DSM 17065 / CIP 109153 / LMG 22923 / VCD115), this protein is DNA ligase 1.